The sequence spans 468 residues: Histone acetyltransferase type B catalytic subunit (468 aa).

Position 8 is a phosphoserine (Ser-8). Interaction with histone H4 N-terminus regions lie at residues 44–46 (EEE) and 208–210 (YKF). Acetyl-CoA is bound by residues 248 to 250 (FLI) and 255 to 261 (QKSGNGS). Residue Glu-283 is the Proton donor/acceptor of the active site. The tract at residues 442–468 (SSNLKRKLDDDENTEGSSSKKARVEDA) is disordered.

The protein belongs to the HAT1 family. In terms of assembly, component of the HAT-B complex composed of at least HAT1 and HAT2. The HAT-B complex binds to histone H4 tail. In the nucleus, interacts with GSK1 and SSB1. In the cytoplasm, interacts with ATG3 and ATG9. In terms of processing, phosphorylated at Ser-8 by GSK1 in the nucleus which impairs its translocation to the cytoplasm through interfering the interaction between HAT1 and SSB1. Dephosphorylation under nutrient starvation conditions promotes the interaction between HAT1 and SSB1 and results in the translocation of HAT1 from the nucleus to the cytoplasm in order to acetylate ATG3 and ATG9.

It is found in the nucleus. It localises to the cytoplasm. The protein localises to the preautophagosomal structure. It catalyses the reaction L-lysyl-[protein] + acetyl-CoA = N(6)-acetyl-L-lysyl-[protein] + CoA + H(+). Functionally, catalytic component of the histone acetylase B (HAT-B) complex. Has intrinsic substrate specificity that modifies lysine in recognition sequence GXGKXG. Involved in DNA double-strand break repair. Required for appressorium turgor pressure, autophagy and conidial nuclear degradation. During the germination process and upon starvation conditions, translocates from the nucleus to the cytoplasm where it acetylates ATG3 at 'lys-262' and 'Lys-267', thus influencing autophagy through controlling ATG3-ATG8 interaction. Also acetylates ATG9 at 'Lys-621' to regulate ATG9 binding to vesicles, which is also important for autophagy and pathogenicity. This Pyricularia oryzae (strain 70-15 / ATCC MYA-4617 / FGSC 8958) (Rice blast fungus) protein is Histone acetyltransferase type B catalytic subunit.